We begin with the raw amino-acid sequence, 346 residues long: Small ribosomal subunit biogenesis GTPase RsgA (346 aa).

The segment at 1 to 26 (MAKRKLTQNQTRRIQSNNAKTLHRHK) is disordered. Positions 7–20 (TQNQTRRIQSNNAK) are enriched in polar residues. In terms of domain architecture, CP-type G spans 103 to 271 (ENEISRPDYY…LIDSPGIREF (169 aa)). GTP is bound by residues 159 to 162 (NKVD) and 213 to 221 (GQSGVGKSS). Residues cysteine 295, cysteine 300, histidine 302, and cysteine 308 each contribute to the Zn(2+) site.

Belongs to the TRAFAC class YlqF/YawG GTPase family. RsgA subfamily. Monomer. Associates with 30S ribosomal subunit, binds 16S rRNA. It depends on Zn(2+) as a cofactor.

The protein localises to the cytoplasm. One of several proteins that assist in the late maturation steps of the functional core of the 30S ribosomal subunit. Helps release RbfA from mature subunits. May play a role in the assembly of ribosomal proteins into the subunit. Circularly permuted GTPase that catalyzes slow GTP hydrolysis, GTPase activity is stimulated by the 30S ribosomal subunit. This is Small ribosomal subunit biogenesis GTPase RsgA from Haemophilus influenzae (strain PittEE).